A 180-amino-acid chain; its full sequence is Ribulose bisphosphate carboxylase small subunit, chloroplastic 4 (180 aa).

The transit peptide at 1–56 directs the protein to the chloroplast; the sequence is MASSIVSSAAVATRANGAQASMVGPFTGLKSTASFPVSRKQNLDITSIASNGGRVR.

Belongs to the RuBisCO small chain family. Heterohexadecamer of 8 large and 8 small subunits.

The protein resides in the plastid. The protein localises to the chloroplast. RuBisCO catalyzes two reactions: the carboxylation of D-ribulose 1,5-bisphosphate, the primary event in carbon dioxide fixation, as well as the oxidative fragmentation of the pentose substrate. Both reactions occur simultaneously and in competition at the same active site. Although the small subunit is not catalytic it is essential for maximal activity. The sequence is that of Ribulose bisphosphate carboxylase small subunit, chloroplastic 4 from Solanum tuberosum (Potato).